The following is a 171-amino-acid chain: uncharacterized protein (171 aa).

The tract at residues 56–83 (TVGVNKNAKNGPTQSQTRSGSAGAQARM) is disordered. Polar residues predominate over residues 57–77 (VGVNKNAKNGPTQSQTRSGSA). Residues 113–170 (KAFETLGLGASATTADIKAAYKDLVKKHHPDANGGDRGSEERFRAVIQAYQLLKQAGF) form the J domain.

This is an uncharacterized protein from Sinorhizobium sp.